A 158-amino-acid chain; its full sequence is Transcription elongation factor GreA (158 aa).

This sequence belongs to the GreA/GreB family.

Functionally, necessary for efficient RNA polymerase transcription elongation past template-encoded arresting sites. The arresting sites in DNA have the property of trapping a certain fraction of elongating RNA polymerases that pass through, resulting in locked ternary complexes. Cleavage of the nascent transcript by cleavage factors such as GreA or GreB allows the resumption of elongation from the new 3'terminus. GreA releases sequences of 2 to 3 nucleotides. This Methylobacterium sp. (strain 4-46) protein is Transcription elongation factor GreA.